The following is a 146-amino-acid chain: MADKLEFELVSPEKLLVSQPVAMVVVPGADGLFGVLPGHAPMIVTVRPGIIDVYGDNQTTVSRRIFVAGGFAEVTDTRCTVLAEEASDLDALLKSDTAALEKQISDLREDIEDATSDVERRALETRLVTTQAKLDLIASQQDAEAA.

It belongs to the ATPase epsilon chain family. In terms of assembly, F-type ATPases have 2 components, CF(1) - the catalytic core - and CF(0) - the membrane proton channel. CF(1) has five subunits: alpha(3), beta(3), gamma(1), delta(1), epsilon(1). CF(0) has three main subunits: a, b and c.

The protein resides in the cell inner membrane. In terms of biological role, produces ATP from ADP in the presence of a proton gradient across the membrane. This Rhodospirillum centenum (strain ATCC 51521 / SW) protein is ATP synthase epsilon chain.